Consider the following 100-residue polypeptide: Small ribosomal subunit protein uS14c (100 aa).

This sequence belongs to the universal ribosomal protein uS14 family. In terms of assembly, part of the 30S ribosomal subunit.

It localises to the plastid. The protein resides in the chloroplast. Its function is as follows. Binds 16S rRNA, required for the assembly of 30S particles. The polypeptide is Small ribosomal subunit protein uS14c (Capsella bursa-pastoris (Shepherd's purse)).